Consider the following 611-residue polypeptide: Elongation factor 4 (611 aa).

A tr-type G domain is found at 11-193; it reads KHIRNFSIVA…KIVKDVPAPT (183 aa). GTP is bound by residues 23–28 and 140–143; these read DHGKST and NKID.

This sequence belongs to the TRAFAC class translation factor GTPase superfamily. Classic translation factor GTPase family. LepA subfamily.

The protein localises to the cell membrane. It carries out the reaction GTP + H2O = GDP + phosphate + H(+). Required for accurate and efficient protein synthesis under certain stress conditions. May act as a fidelity factor of the translation reaction, by catalyzing a one-codon backward translocation of tRNAs on improperly translocated ribosomes. Back-translocation proceeds from a post-translocation (POST) complex to a pre-translocation (PRE) complex, thus giving elongation factor G a second chance to translocate the tRNAs correctly. Binds to ribosomes in a GTP-dependent manner. The sequence is that of Elongation factor 4 from Limosilactobacillus reuteri (strain DSM 20016) (Lactobacillus reuteri).